The primary structure comprises 495 residues: Ankyrin repeat domain-containing protein 34A (495 aa).

ANK repeat units follow at residues 4 to 33 (TEGH…YVNE), 37 to 72 (QGET…DPNI), 76 to 106 (LGRT…DPSV), and 110 to 139 (AGAS…AKGT). N5-methylglutamine is present on Gln15. Polar residues-rich tracts occupy residues 147–162 (DTSP…YLNS) and 180–191 (VCTSPSEVQLQT). Residues 147-495 (DTSPSGTKKT…SLGGPGEPGR (349 aa)) form a disordered region. Over residues 203–213 (AQEEEEKRDVF) the composition is skewed to basic and acidic residues. The segment covering 223-232 (DPSPSEPLPK) has biased composition (pro residues). Basic residues predominate over residues 233–242 (PPRHPPKPLK). Thr315 is modified (phosphothreonine). Over residues 375–385 (SVSSPRQSQES) the composition is skewed to polar residues. Positions 462–472 (RTKRKLVRRHS) are enriched in basic residues. Residues 485 to 495 (QSLGGPGEPGR) are compositionally biased toward gly residues.

The protein belongs to the ANKRD34 family. In terms of processing, methylated at Gln-15 by N6AMT1.

The polypeptide is Ankyrin repeat domain-containing protein 34A (Ankrd34a) (Rattus norvegicus (Rat)).